The primary structure comprises 744 residues: Serine/threonine-protein kinase GM11705 (744 aa).

Residues 17-35 are compositionally biased toward polar residues; sequence VLSSHQPSPSATHPQSVPS. Disordered stretches follow at residues 17–38 and 54–78; these read VLSS…SKAN and NVQE…PEKE. Doublecortin domains are found at residues 154 to 240 and 309 to 392; these read LRIK…VEYN and RIVT…AEDF. Positions 473-731 constitute a Protein kinase domain; sequence YTLGRIIGDG…SEDILDHPWT (259 aa). Residues 479 to 487 and K502 each bind ATP; that span reads IGDGNFAIV. The active-site Proton acceptor is D594.

It belongs to the protein kinase superfamily. CAMK Ser/Thr protein kinase family. CaMK subfamily.

It catalyses the reaction L-seryl-[protein] + ATP = O-phospho-L-seryl-[protein] + ADP + H(+). It carries out the reaction L-threonyl-[protein] + ATP = O-phospho-L-threonyl-[protein] + ADP + H(+). The chain is Serine/threonine-protein kinase GM11705 from Drosophila sechellia (Fruit fly).